A 538-amino-acid chain; its full sequence is ATP synthase subunit alpha, mitochondrial (538 aa).

An ATP-binding site is contributed by 197–204; that stretch reads GDRQTGKT. The tract at residues 228–248 is essential and sufficient for enterobactin binding; the sequence is FCIYVAVGQKRSTVAQIVKRL.

The protein belongs to the ATPase alpha/beta chains family. Subunit of the F-type ATPase which has 2 components, CF(1) - the catalytic core - and CF(0) - the membrane proton channel. Ubiquitous (at protein level).

It is found in the mitochondrion. Its subcellular location is the mitochondrion inner membrane. Mitochondrial membrane ATP synthase (F(1)F(0) ATP synthase or Complex V) produces ATP from ADP in the presence of a proton gradient across the membrane which is generated by electron transport complexes of the respiratory chain. F-type ATPases consist of two structural domains, F(1) - containing the extramembraneous catalytic core, and F(0) - containing the membrane proton channel, linked together by a central stalk and a peripheral stalk. During catalysis, ATP synthesis in the catalytic domain of F(1) is coupled via a rotary mechanism of the central stalk subunits to proton translocation. Subunits alpha and beta form the catalytic core in F(1). Rotation of the central stalk against the surrounding subunits leads to hydrolysis of ATP in three separate catalytic sites on the beta subunits. Subunit alpha does not bear the catalytic high-affinity ATP-binding sites. Binds the bacterial siderophore enterobactin and is required for the assimilation of enterobactin-bound iron from non-pathogenic bacteria. Promotes mitochondrial accumulation of enterobactin-derived iron ions. In Caenorhabditis elegans, this protein is ATP synthase subunit alpha, mitochondrial.